A 204-amino-acid chain; its full sequence is Ribosomal RNA small subunit methyltransferase G (204 aa).

S-adenosyl-L-methionine-binding positions include glycine 76, leucine 81, 127-128 (IE), and arginine 140.

Belongs to the methyltransferase superfamily. RNA methyltransferase RsmG family.

The protein localises to the cytoplasm. It carries out the reaction guanosine(527) in 16S rRNA + S-adenosyl-L-methionine = N(7)-methylguanosine(527) in 16S rRNA + S-adenosyl-L-homocysteine. In terms of biological role, specifically methylates the N7 position of guanine in position 527 of 16S rRNA. The protein is Ribosomal RNA small subunit methyltransferase G of Francisella philomiragia subsp. philomiragia (strain ATCC 25017 / CCUG 19701 / FSC 153 / O#319-036).